The following is a 481-amino-acid chain: MASGGLRGLAVAGGGESSDSEDDGWEIGYLDRVSQKLKVPLPVEEKNETFKKALTTGDISLVQELLDSGISVDSSFRYGWTPLMYAASIANVELVRVLLDRGANASFDKDKQTILITACSARGSEEQILKCVELLLSRNADPNVACRRLMTPIMYAARDGHPQVVAVLVAHGAEVNTQDENGYTALTWAARQGHKNVVLKLLELGANKMLQTKDGKIPSEIAKRNKHLEIFNFLSLTLNPLEGNLKQLTKEETICKLLTTDSDKEKDHIFSSYTAFGDLEIFLHGLGLEHMTDLLKEKDITLRHLLTMRKDEFTKNGITNKDQQKILSALKELEVEEIKFGELPEVAKLEISGDEFLNFLLKLNKQCGHLITAVQNIITELPVNSHKIVLEWASPRNFTSVCEELVSNVEDLSEEVHKLKDLIQKLQNERENDPTHIPLMEEVSTWNSRILKRTAIAVCGFGFLLFICKLTVQRKYPNICF.

Residues 1–16 (MASGGLRGLAVAGGGE) are compositionally biased toward gly residues. Residues 1 to 23 (MASGGLRGLAVAGGGESSDSEDD) form a disordered region. Serine 17, serine 18, and serine 20 each carry phosphoserine. ANK repeat units lie at residues 45-74 (EKNE…SVDS), 78-107 (YGWT…NASF), 110-144 (DKQT…DPNV), 148-177 (RLMT…EVNT), 181-210 (NGYT…NKML), and 214-243 (DGKI…PLEG). The SAM domain occupies 272-334 (SYTAFGDLEI…KILSALKELE (63 aa)).

Interacts with DDX4, PIWIL1, RANBP9 and TDRD1.

The protein resides in the cytoplasm. In terms of biological role, plays a central role during spermatogenesis by repressing transposable elements and preventing their mobilization, which is essential for the germline integrity. Acts via the piRNA metabolic process, which mediates the repression of transposable elements during meiosis by forming complexes composed of piRNAs and Piwi proteins and governs the methylation and subsequent repression of transposons. Its association with pi-bodies suggests a participation in the primary piRNAs metabolic process. Required prior to the pachytene stage to facilitate the production of multiple types of piRNAs, including those associated with repeats involved in the regulation of retrotransposons. May act by mediating protein-protein interactions during germ cell maturation. This is Ankyrin repeat, SAM and basic leucine zipper domain-containing protein 1 (ASZ1) from Microcebus murinus (Gray mouse lemur).